The primary structure comprises 388 residues: Succinate--CoA ligase [ADP-forming] subunit beta (388 aa).

In terms of domain architecture, ATP-grasp spans 9–244 (KQLFARYGLP…QSQEDPREAQ (236 aa)). Residues Lys-46, 53 to 55 (GRG), Glu-99, Thr-102, and Glu-107 contribute to the ATP site. Residues Asn-199 and Asp-213 each coordinate Mg(2+). Substrate contacts are provided by residues Asn-264 and 321–323 (GIV).

Belongs to the succinate/malate CoA ligase beta subunit family. In terms of assembly, heterotetramer of two alpha and two beta subunits. Mg(2+) serves as cofactor.

It carries out the reaction succinate + ATP + CoA = succinyl-CoA + ADP + phosphate. The enzyme catalyses GTP + succinate + CoA = succinyl-CoA + GDP + phosphate. It participates in carbohydrate metabolism; tricarboxylic acid cycle; succinate from succinyl-CoA (ligase route): step 1/1. In terms of biological role, succinyl-CoA synthetase functions in the citric acid cycle (TCA), coupling the hydrolysis of succinyl-CoA to the synthesis of either ATP or GTP and thus represents the only step of substrate-level phosphorylation in the TCA. The beta subunit provides nucleotide specificity of the enzyme and binds the substrate succinate, while the binding sites for coenzyme A and phosphate are found in the alpha subunit. This Salmonella choleraesuis (strain SC-B67) protein is Succinate--CoA ligase [ADP-forming] subunit beta.